The sequence spans 239 residues: MTVEWLAEQLKEHNIELTETQKQQFQTYYCLLVEWNEKMNLTSITDEHDVYLKHFYDSIAPSFYFDFNQPISICDVGAGAGFPSIPLKIMFPQLKVTIVDSLNKRIQFLNHLASELQLQDVSFIHDRAETFGKGVYRESYDVVTARAVARLSVLSELCLPLVKKGGQFVALKSSKGEEELEEAKFAISVLGGNVTETHTYELPEDAGERQMFIIDKKRQTPKKYPRKPGTPNKTPLLEK.

S-adenosyl-L-methionine is bound by residues Gly-77, Phe-82, 128–129 (AE), and Arg-146. The segment at 215–239 (DKKRQTPKKYPRKPGTPNKTPLLEK) is disordered.

Belongs to the methyltransferase superfamily. RNA methyltransferase RsmG family.

The protein resides in the cytoplasm. Functionally, specifically methylates the N7 position of guanine in position 535 of 16S rRNA. The polypeptide is Ribosomal RNA small subunit methyltransferase G (Staphylococcus aureus (strain bovine RF122 / ET3-1)).